The chain runs to 331 residues: MVSVGIVGTGSYVPDKVLTNFDLEQMVDTNDQWIVSRTGIKERHIAAPETPVSELCYQAALRALEDAKLAPEELDLVIVATITPDFVFPATACLVAERLGAKKAAGFDLQAACTGFLYGVATAAQFIATGIYKNALVIGGETLSKILNWEDRGTCILFGDGAGAAVLQPVEEGYGFLGYDLGMDGAGGSLLTMPGGGSMHPASAETVAKKMHTIQMAGSEVFKFAVRIMGETALKALDKAGLGIGDVDCLIPHQANTRIVDAAVKRLGIDAGKVVVNLDRYGNMSAASIPVALDEAARSGRLNYGDIMVMVGFGGGLTWGAAVVKWSKRGV.

Catalysis depends on residues Cys-113 and His-253. An ACP-binding region spans residues 254-258 (QANTR). Residue Asn-283 is part of the active site.

The protein belongs to the thiolase-like superfamily. FabH family. In terms of assembly, homodimer.

Its subcellular location is the cytoplasm. The enzyme catalyses malonyl-[ACP] + acetyl-CoA + H(+) = 3-oxobutanoyl-[ACP] + CO2 + CoA. Its pathway is lipid metabolism; fatty acid biosynthesis. Catalyzes the condensation reaction of fatty acid synthesis by the addition to an acyl acceptor of two carbons from malonyl-ACP. Catalyzes the first condensation reaction which initiates fatty acid synthesis and may therefore play a role in governing the total rate of fatty acid production. Possesses both acetoacetyl-ACP synthase and acetyl transacylase activities. Its substrate specificity determines the biosynthesis of branched-chain and/or straight-chain of fatty acids. The sequence is that of Beta-ketoacyl-[acyl-carrier-protein] synthase III from Desulfitobacterium hafniense (strain DSM 10664 / DCB-2).